The primary structure comprises 328 residues: Flagellar motor switch protein FliM (328 aa).

Residues M1–S45 form an interaction with unphosphorylated CheY region.

It belongs to the FliM family. In terms of assembly, interacts (via N-terminus) with unphosphorylated CheY. Interacts (via central domain) with FliG (via central domain or via central domain and C-terminus).

The protein localises to the cell inner membrane. Its subcellular location is the bacterial flagellum basal body. Its function is as follows. FliM is one of three proteins (FliG, FliN, FliM) that forms the rotor-mounted switch complex (C ring), located at the base of the basal body. This complex interacts with the CheY and CheX chemotaxis proteins, in addition to contacting components of the motor that determine the direction of flagellar rotation. This Thermotoga maritima (strain ATCC 43589 / DSM 3109 / JCM 10099 / NBRC 100826 / MSB8) protein is Flagellar motor switch protein FliM.